We begin with the raw amino-acid sequence, 273 residues long: Large ribosomal subunit protein uL2cz/uL2cy (273 aa).

Disordered regions lie at residues 1–22 and 225–273; these read MAKHLYKTPIPSTRKGTVDRQV and PVDH…RRRK.

It belongs to the universal ribosomal protein uL2 family. Part of the 50S ribosomal subunit.

It localises to the plastid. The protein resides in the chloroplast. This Saccharum hybrid (Sugarcane) protein is Large ribosomal subunit protein uL2cz/uL2cy (rpl2-A).